A 523-amino-acid chain; its full sequence is Pituitary adenylate cyclase-activating polypeptide type I receptor (523 aa).

The N-terminal stretch at 1 to 19 (MARVLQLSLTALLLPVAIA) is a signal peptide. Residues 20-151 (MHSDCIFKKE…SGDQDYYYLS (132 aa)) lie on the Extracellular side of the membrane. 3 disulfides stabilise this stretch: cysteine 33–cysteine 62, cysteine 53–cysteine 117, and cysteine 76–cysteine 133. 3 N-linked (GlcNAc...) asparagine glycosylation sites follow: asparagine 47, asparagine 59, and asparagine 116. An important for ADCYAP1/PACAP ligand binding and specificity region spans residues 124 to 138 (EPFPHYFDACGFDDY). Residues 124–138 (EPFPHYFDACGFDDY) form an important for ligand binding and specificity region. Residues 152 to 176 (VKALYTVGYSTSLATLTTAMVILCR) traverse the membrane as a helical segment. Over 177 to 186 (FRKLHCTRNF) the chain is Cytoplasmic. Residues 187-207 (IHMNLFVSFMLRAISVFIKDW) traverse the membrane as a helical segment. The Extracellular segment spans residues 208 to 222 (ILYAEQDSSHCFVST). Residues 223-248 (VECKAVMVFFHYCVVSNYFWLFIEGL) form a helical membrane-spanning segment. An intrachain disulfide couples cysteine 225 to cysteine 295. At 249 to 266 (YLFTLLVETFFPERRYFY) the chain is on the cytoplasmic side. Residues 267-289 (WYTIIGWGTPTVCVTVWAVLRLY) form a helical membrane-spanning segment. The Extracellular portion of the chain corresponds to 290-301 (FDDAGCWDMNDS). Residues 302 to 328 (TALWWVIKGPVVGSIMVNFVLFIGIII) traverse the membrane as a helical segment. The Cytoplasmic segment spans residues 329–346 (ILVQKLQSPDMGGNESSI). The chain crosses the membrane as a helical span at residues 347–429 (YLTNLRLRVP…HYTVFAFSPE (83 aa)). Residues 430-434 (NVSKR) are Extracellular-facing. Residues 435–458 (ERLVFELGLGSFQGFVVAVLYCFL) traverse the membrane as a helical segment. Over 459–523 (NGEVQAEIKR…SSLPADNLAT (65 aa)) the chain is Cytoplasmic. Residues serine 489 and serine 502 each carry the phosphoserine modification.

This sequence belongs to the G-protein coupled receptor 2 family. In terms of assembly, interacts with maxadilan, a vasodilator peptide from Lutzomyia longipalpis saliva; the interaction results in ADCYAP1R1 activation. In terms of tissue distribution, hypothalamus, anterior pituitary, adrenal medulla, testicular germ cells.

The protein localises to the cell membrane. G protein-coupled receptor activated by the neuropeptide pituitary adenylate cyclase-activating polypeptide (ADCYAP1/PACAP). Binds both PACAP27 and PACAP38 bioactive peptides. Ligand binding causes a conformation change that triggers signaling via guanine nucleotide-binding proteins (G proteins) and modulates the activity of downstream effectors. Activates cAMP-dependent pathway. May regulate the release of adrenocorticotropin, luteinizing hormone, growth hormone, prolactin, epinephrine, and catecholamine. May play a role in spermatogenesis and sperm motility. Causes smooth muscle relaxation and secretion in the gastrointestinal tract. The polypeptide is Pituitary adenylate cyclase-activating polypeptide type I receptor (Rattus norvegicus (Rat)).